The chain runs to 163 residues: Nucleotide-binding protein BLi01194 (163 aa).

The protein belongs to the YajQ family.

Its function is as follows. Nucleotide-binding protein. This Bacillus licheniformis (strain ATCC 14580 / DSM 13 / JCM 2505 / CCUG 7422 / NBRC 12200 / NCIMB 9375 / NCTC 10341 / NRRL NRS-1264 / Gibson 46) protein is Nucleotide-binding protein BLi01194.